We begin with the raw amino-acid sequence, 340 residues long: Glyceraldehyde-3-phosphate dehydrogenase (340 aa).

NAD(+) contacts are provided by residues 11–12 (SI) and G111. 140–142 (SCN) serves as a coordination point for D-glyceraldehyde 3-phosphate. C141 functions as the Nucleophile in the catalytic mechanism. Position 169 (R169) interacts with NAD(+). D-glyceraldehyde 3-phosphate is bound at residue 195–196 (HG). Position 303 (Q303) interacts with NAD(+).

It belongs to the glyceraldehyde-3-phosphate dehydrogenase family. As to quaternary structure, homotetramer.

The protein localises to the cytoplasm. It carries out the reaction D-glyceraldehyde 3-phosphate + phosphate + NADP(+) = (2R)-3-phospho-glyceroyl phosphate + NADPH + H(+). It catalyses the reaction D-glyceraldehyde 3-phosphate + phosphate + NAD(+) = (2R)-3-phospho-glyceroyl phosphate + NADH + H(+). It functions in the pathway carbohydrate degradation; glycolysis; pyruvate from D-glyceraldehyde 3-phosphate: step 1/5. The polypeptide is Glyceraldehyde-3-phosphate dehydrogenase (Methanococcus maripaludis (strain C6 / ATCC BAA-1332)).